Reading from the N-terminus, the 145-residue chain is Large ribosomal subunit protein uL16 (145 aa).

It belongs to the universal ribosomal protein uL16 family. As to quaternary structure, part of the 50S ribosomal subunit.

Functionally, binds 23S rRNA and is also seen to make contacts with the A and possibly P site tRNAs. This Herpetosiphon aurantiacus (strain ATCC 23779 / DSM 785 / 114-95) protein is Large ribosomal subunit protein uL16.